Consider the following 170-residue polypeptide: NADH-quinone oxidoreductase subunit B (170 aa).

[4Fe-4S] cluster is bound by residues cysteine 42, cysteine 43, cysteine 107, and cysteine 136.

The protein belongs to the complex I 20 kDa subunit family. NDH-1 is composed of 14 different subunits. Subunits NuoB, C, D, E, F, and G constitute the peripheral sector of the complex. Requires [4Fe-4S] cluster as cofactor.

Its subcellular location is the cell inner membrane. It carries out the reaction a quinone + NADH + 5 H(+)(in) = a quinol + NAD(+) + 4 H(+)(out). In terms of biological role, NDH-1 shuttles electrons from NADH, via FMN and iron-sulfur (Fe-S) centers, to quinones in the respiratory chain. The immediate electron acceptor for the enzyme in this species is believed to be ubiquinone. Couples the redox reaction to proton translocation (for every two electrons transferred, four hydrogen ions are translocated across the cytoplasmic membrane), and thus conserves the redox energy in a proton gradient. The polypeptide is NADH-quinone oxidoreductase subunit B (Campylobacter concisus (strain 13826)).